The sequence spans 540 residues: Acyl-CoA synthetase 7 (540 aa).

ATP contacts are provided by residues 186-194, aspartate 415, arginine 430, and lysine 522; that span reads SSGTTGKPK. Residues 538-540 carry the Microbody targeting signal motif; it reads AKL.

It belongs to the ATP-dependent AMP-binding enzyme family. Expressed in intestine.

The protein localises to the peroxisome. The catalysed reaction is nonanoate + ATP + CoA = nonanoyl-CoA + AMP + diphosphate. The enzyme catalyses IC-asc-C7 + ATP + CoA = IC-asc-C7-CoA + AMP + diphosphate. It carries out the reaction IC-asc-C9 + ATP + CoA = IC-asc-C9-CoA + AMP + diphosphate. Functionally, plays a role in ascaroside pheromones biosynthesis, which regulates development and behavior. Specifically, activates the side chain of medium-chain indol-3-carbonyl (IC)-ascarosides for shortening through beta-oxidation. Converts IC-asc-C7 and IC-asc-C9 into IC-asc-C7-CoA and IC-asc-C9-CoA, respectively. May play a role in fatty-acid metabolism by activating and converting nonanoate (C9) into nonanoyl-CoA (C9-CoA). This is Acyl-CoA synthetase 7 from Caenorhabditis elegans.